Consider the following 656-residue polypeptide: Pyoverdine export ATP-binding/permease protein PvdT (656 aa).

The ABC transporter domain maps to 6 to 245 (IDLRGIRKSY…SANPAALQAV (240 aa)). Position 43–50 (43–50 (GASGSGKS)) interacts with ATP. 4 helical membrane-spanning segments follow: residues 284–304 (ALTLLGIVIGVASVVVMLAVG), 538–558 (IAAISLLVGGIGVMNIMLMTV), 589–609 (LSVVGGLAGIVLALAMGAALL), and 619–639 (LSAVIGAFACALVTGVIFGFM).

Belongs to the ABC transporter superfamily. Macrolide exporter (TC 3.A.1.122) family. As to quaternary structure, part of the tripartite efflux system PvdRT-OpmQ, which is composed of an inner membrane component with both ATPase and permease domains, PvdT, a periplasmic membrane fusion protein, PvdR, and an outer membrane component, OpmQ.

It localises to the cell inner membrane. Part of the tripartite efflux system PvdRT-OpmQ required for the secretion into the extracellular milieu of the siderophore pyoverdine (PVD), which is involved in iron acquisition. This subunit binds PVD and drives its secretion by hydrolyzing ATP. The system is responsible for export of newly synthesized PVD after the final steps of biosynthesis have taken place in the periplasm. It is also responsible for recycling of PVD after internalization of ferri-PVD into the periplasm by the outer-membrane receptor FpvA and release of iron from PVD, thus making PVD available for new cycles of iron uptake. The polypeptide is Pyoverdine export ATP-binding/permease protein PvdT (Pseudomonas syringae pv. tomato (strain ATCC BAA-871 / DC3000)).